We begin with the raw amino-acid sequence, 636 residues long: MGKVVGIDLGTTNSEVAVMQGGEPVVIPSAEGSTLIPSVVAINKNGERIVGRQAKNQAILNPENTVYSIKRFMGRKWGEPAGRELPVEADAKRKPYKVIQGNNNEVRVVMGDKDFSPPEVSAMILQKLKSDAEAYLGEKVTEAVITVPAYFNDAQRQATKDAGAIAGLKVLRIINEPTAAALAYGLDKKKDETIAVYDLGGGTFDISILELGEGTFQVKSTAGDTHLGGDDFDQKIIDWLIAEYKKDQGIDLSKDKTALQRLKEAAEKAKIELSTVQQTEINLPFITADASGPKHLNIILTRSKLEQMVMDLVEKSLEPCRQALKDSGKTSAEINEVILVGGQTRMPLVQQKVKDFFGKEPNKGVNPDEVVAIGAAIQAGVLKGEVSDVLLLDVIPLTLGIETLGGVSTALITRNTTIPTSKSQVFSTAADNQPSVEIHVLQGERPMAADNRTLGRFMLDGILPAPRGVPQIEVTFDIDANGMLSVKAKDKGTGREQKITITASSGLSKEEVEKMTREAEAHAAEDTKRKEEIEARNVADNLAYNAEKTLRDNKDKIPAELNTELESKIAAVRTALQGNDVEAIKKTTQELSTALQSVGSAVYGKQQEGAPAQEEPSAEGKKADDEGTVEGEFREV.

Threonine 203 carries the phosphothreonine; by autocatalysis modification. The tract at residues 602–636 (VYGKQQEGAPAQEEPSAEGKKADDEGTVEGEFREV) is disordered. Positions 618-636 (AEGKKADDEGTVEGEFREV) are enriched in basic and acidic residues.

Belongs to the heat shock protein 70 family.

Its function is as follows. Acts as a chaperone. The sequence is that of Chaperone protein DnaK from Dehalococcoides mccartyi (strain ATCC BAA-2100 / JCM 16839 / KCTC 5957 / BAV1).